The chain runs to 342 residues: uncharacterized protein (342 aa).

It belongs to the cycloisomerase 2 family.

This is an uncharacterized protein from Staphylococcus aureus (strain N315).